The following is a 295-amino-acid chain: Putative aquaporin-12B (295 aa).

The Cytoplasmic segment spans residues 1-22 (MAGLNVSLSFFFATFTLCEAAR). A helical membrane pass occupies residues 23-41 (RASKALLPVGAYEVFAREA). At 42–55 (MRTLVELGPWAGDF) the chain is on the extracellular side. The helical transmembrane segment at 56 to 74 (GPDLLLTLLFLLFLAHGVT) threads the bilayer. Residues 75–76 (LD) are Cytoplasmic-facing. The segment at residues 77–114 (GASANPTVSLQEFLMAEESLPGTLLKLAAQGLGMQAAC) is an intramembrane region (discontinuously helical). An NPA 1 motif is present at residues 81 to 83 (NPT). The Cytoplasmic segment spans residues 115-120 (TLTRLC). The chain crosses the membrane as a helical span at residues 121–142 (WAWELSDLHLLQSLMAQSCSSA). Over 143-145 (LRT) the chain is Extracellular. A helical membrane pass occupies residues 146–166 (SVPHGALVEAACAFCFHLTLL). Topologically, residues 167 to 174 (HLRHSPPA) are cytoplasmic. A helical transmembrane segment spans residues 175-191 (YSGPAVALLVTVTAYTA). Residues 192 to 194 (GPF) lie on the Extracellular side of the membrane. An intramembrane region (discontinuously helical) is located at residues 195–206 (TSAFFNPALAAS). The short motif at 200 to 202 (NPA) is the NPA 2 element. Residues 207–223 (VTFACSGHTLLEYVQVY) are Extracellular-facing. A helical transmembrane segment spans residues 224–244 (WLGPLTGMVLAVLLHQGRLPH). Over 245 to 295 (LFQRNLFYGQKNKYRAPRGKPAPASGDTQTPAKGSSVREPGRSGVEGPHSS) the chain is Cytoplasmic. A disordered region spans residues 257 to 295 (KYRAPRGKPAPASGDTQTPAKGSSVREPGRSGVEGPHSS).

This sequence belongs to the MIP/aquaporin (TC 1.A.8) family. AQP11/AQP12 subfamily. Homotetramer; each monomer provides an independent water pore.

The protein localises to the membrane. It carries out the reaction H2O(in) = H2O(out). Its function is as follows. Putative aquaporin. Could form homotetrameric transmembrane channels, with each monomer independently mediating water transport across the plasma membrane along its osmotic gradient. This is Putative aquaporin-12B from Homo sapiens (Human).